The chain runs to 82 residues: RNA-binding protein Hfq (82 aa).

Positions 11–71 (DTFLNHVRKT…ISTIMPGAPI (61 aa)) constitute a Sm domain.

It belongs to the Hfq family. Homohexamer.

In terms of biological role, RNA chaperone that binds small regulatory RNA (sRNAs) and mRNAs to facilitate mRNA translational regulation in response to envelope stress, environmental stress and changes in metabolite concentrations. Also binds with high specificity to tRNAs. This chain is RNA-binding protein Hfq, found in Nitrobacter winogradskyi (strain ATCC 25391 / DSM 10237 / CIP 104748 / NCIMB 11846 / Nb-255).